The sequence spans 298 residues: HTH-type transcriptional regulator YhaJ (298 aa).

In terms of domain architecture, HTH lysR-type spans L7–T64. The segment at residues F24–Q43 is a DNA-binding region (H-T-H motif).

The protein belongs to the LysR transcriptional regulatory family.

Positive regulator partially required for expression of genes in the locus of effacement (LEE) large pathogenicity island (PAI). Also partially responsible for expression of neighboring gene dlsT (yhaO) during late exponential growth. Binds to DNA of promoter 1 in LEE and DNA from the dlsT promoter region. The protein is HTH-type transcriptional regulator YhaJ (yhaJ) of Escherichia coli O157:H7.